We begin with the raw amino-acid sequence, 476 residues long: ATP sulfurylase 2 (476 aa).

Residues 1–56 constitute a chloroplast transit peptide; that stretch reads MSLMIRSSYVSHITLFQPRNSKPSSFTNQISFLSSSNNNPFLNLVYKRNLTMQSVS.

Belongs to the sulfate adenylyltransferase family. Homotetramer. In terms of tissue distribution, mostly expressed in leaves or cotyledons.

It is found in the plastid. It localises to the chloroplast. Its subcellular location is the cytoplasm. The enzyme catalyses sulfate + ATP + H(+) = adenosine 5'-phosphosulfate + diphosphate. It participates in sulfur metabolism; hydrogen sulfide biosynthesis; sulfite from sulfate: step 1/3. This Arabidopsis thaliana (Mouse-ear cress) protein is ATP sulfurylase 2 (APS2).